The primary structure comprises 560 residues: MTNISLKPNEVGVFAIGGLGEIGKNTYGIEYQDEIIIVDAGIKFPEDDLLGIDYVIPDYSYIVDNLDRVKALVITHGHEDHIGGIPFLLKQANIPIYAGPLALALIRGKLEEHGLWREATVYEINHNTELTFKNMSVTFFKTTHSIPEPVGIVIHTPQGKIICTGDFKFDFTPVGDPADLQRMAALGEEGVLCLLSDSTNAEIPTFTNSEKVVGQSILKIIEGIHGRIIFASFASNIYRLQQAAEAAVKTGRKIAVFGRSMEKAIVNGIELGYIKVPKGTFIEPSELKNLHASEVLIMCTGSQGESMAALARIANGTHRQVTLQPGDTVIFSSSPIPGNTTSVNKLINTIQEAGVDVIHGKVNNIHTSGHGGQQEQKLMLSLIKPKYFMPVHGEYRMQKIHAGLAMDIGIPKENIFIMENGDVLALTSDSARIAGHFNAQDIYVDGNGIGDIGAAVLRDRRDLSEDGVVLAVATVDFNTQMILAGPDILSRGFIYMRESGDLIRESQRVLFNAIRIALKNKDASIQSVNGAIVNALRPFLYEKTEREPIIIPMVLTPDKH.

Zn(2+) is bound by residues histidine 76, histidine 78, aspartate 80, histidine 81, histidine 144, and aspartate 166. 366–370 (HTSGH) is a binding site for substrate. Histidine 392 contributes to the Zn(2+) binding site.

The protein belongs to the metallo-beta-lactamase superfamily. RNA-metabolizing metallo-beta-lactamase-like family. Bacterial RNase J subfamily. As to quaternary structure, homodimer, may be a subunit of the RNA degradosome. It depends on Zn(2+) as a cofactor.

The protein localises to the cytoplasm. Its function is as follows. An RNase that has 5'-3' exonuclease and possibly endonuclease activity. Involved in maturation of rRNA and in some organisms also mRNA maturation and/or decay. Has an overlapping but not completely redundant role with RNase J2 in the decay of mRNA. This is Ribonuclease J 1 from Streptococcus pyogenes serotype M3 (strain ATCC BAA-595 / MGAS315).